A 537-amino-acid polypeptide reads, in one-letter code: Pentatricopeptide repeat-containing protein At4g32450, mitochondrial (537 aa).

Residues 1 to 110 (MIYTLTRGSL…EHSEIINQRN (110 aa)) constitute a mitochondrion transit peptide. Over residues 113 to 140 (WQSSDGCSSYGTTGNGVPQENNTGGNHF) the composition is skewed to polar residues. The tract at residues 113 to 148 (WQSSDGCSSYGTTGNGVPQENNTGGNHFQQDHSGHS) is disordered. PPR repeat units lie at residues 145-179 (SGHS…GYVV), 180-210 (DLPR…ITSS), 215-249 (DISA…NLET), 250-280 (WCGV…GNKP), 281-316 (DGEM…GIIP), and 317-347 (CMEH…MEPN). Residues 412-442 (YGIRYMAAGDISRPENRELYMALKSLKEHMI) form a type E(+) motif region. Positions 443 to 537 (EIGYVPLSKL…DGVCSCREYW (95 aa)) are type DYW motif.

The protein belongs to the PPR family. PCMP-H subfamily.

The protein resides in the mitochondrion. This is Pentatricopeptide repeat-containing protein At4g32450, mitochondrial (PCMP-H63) from Arabidopsis thaliana (Mouse-ear cress).